We begin with the raw amino-acid sequence, 490 residues long: ATP synthase subunit beta, chloroplastic (490 aa).

Residue 170–177 (GGAGVGKT) coordinates ATP.

Belongs to the ATPase alpha/beta chains family. In terms of assembly, F-type ATPases have 2 components, CF(1) - the catalytic core - and CF(0) - the membrane proton channel. CF(1) has five subunits: alpha(3), beta(3), gamma(1), delta(1), epsilon(1). CF(0) has four main subunits: a(1), b(1), b'(1) and c(9-12).

Its subcellular location is the plastid. It is found in the chloroplast thylakoid membrane. It carries out the reaction ATP + H2O + 4 H(+)(in) = ADP + phosphate + 5 H(+)(out). Functionally, produces ATP from ADP in the presence of a proton gradient across the membrane. The catalytic sites are hosted primarily by the beta subunits. The chain is ATP synthase subunit beta, chloroplastic from Ipomoea aquatica (Water spinach).